A 457-amino-acid polypeptide reads, in one-letter code: Cell division cycle 20.1, cofactor of APC complex (457 aa).

WD repeat units follow at residues 138-175 (VDDF…TSEL), 180-219 (EEKG…QLRT), 223-260 (GHQS…PIVE), 264-303 (GHTQ…SNST), 312-354 (EHTS…CLNS), 356-397 (DTGS…KMAE), and 400-439 (GHTS…ETAK).

Belongs to the WD repeat CDC20/Fizzy family. In terms of assembly, the APC/C is composed of at least 11 subunits that stay tightly associated throughout the cell cycle. Interacts with APC10, FZR1, FZR2, FZR3. Binds to GIG1 and PYM. Part of the mitotic checkpoint complex (MCC); interacts with MAD2, BUB3.1, BUBR1 and BUB1. Binds to cyclins CYCA1-2, CYCB2-1 and CYCB2-2. Interacts with PANS1. Expressed in meristems and organ primordia. Present in flowers, leaves, stems, roots, pollen grains and developing seeds.

The protein resides in the nucleus. Its pathway is protein modification; protein ubiquitination. Its function is as follows. Component of the anaphase promoting complex/cyclosome (APC/C), a cell cycle-regulated E3 ubiquitin-protein ligase complex that controls progression through mitosis and the G1 phase of the cell cycle. This is Cell division cycle 20.1, cofactor of APC complex (CDC20-1) from Arabidopsis thaliana (Mouse-ear cress).